The chain runs to 937 residues: Valine--tRNA ligase (937 aa).

Positions 44–54 (PNVTGTLHMGH) match the 'HIGH' region motif. The short motif at 548–552 (KMSKS) is the 'KMSKS' region element. Lys551 is a binding site for ATP. Residues 874–937 (AAETARLTKE…KLKAQLLKLA (64 aa)) adopt a coiled-coil conformation.

This sequence belongs to the class-I aminoacyl-tRNA synthetase family. ValS type 1 subfamily. In terms of assembly, monomer.

The protein localises to the cytoplasm. It carries out the reaction tRNA(Val) + L-valine + ATP = L-valyl-tRNA(Val) + AMP + diphosphate. Functionally, catalyzes the attachment of valine to tRNA(Val). As ValRS can inadvertently accommodate and process structurally similar amino acids such as threonine, to avoid such errors, it has a 'posttransfer' editing activity that hydrolyzes mischarged Thr-tRNA(Val) in a tRNA-dependent manner. This Laribacter hongkongensis (strain HLHK9) protein is Valine--tRNA ligase.